The sequence spans 264 residues: Thymidylate synthase (264 aa).

Residue Arg-21 coordinates dUMP. His-51 serves as a coordination point for (6R)-5,10-methylene-5,6,7,8-tetrahydrofolate. Arg-126–Arg-127 provides a ligand contact to dUMP. Cys-146 acts as the Nucleophile in catalysis. DUMP-binding positions include Arg-166–Asp-169, Asn-177, and His-207–Tyr-209. Asp-169 provides a ligand contact to (6R)-5,10-methylene-5,6,7,8-tetrahydrofolate. Ala-263 serves as a coordination point for (6R)-5,10-methylene-5,6,7,8-tetrahydrofolate.

It belongs to the thymidylate synthase family. Bacterial-type ThyA subfamily. Homodimer.

Its subcellular location is the cytoplasm. The enzyme catalyses dUMP + (6R)-5,10-methylene-5,6,7,8-tetrahydrofolate = 7,8-dihydrofolate + dTMP. Its pathway is pyrimidine metabolism; dTTP biosynthesis. Catalyzes the reductive methylation of 2'-deoxyuridine-5'-monophosphate (dUMP) to 2'-deoxythymidine-5'-monophosphate (dTMP) while utilizing 5,10-methylenetetrahydrofolate (mTHF) as the methyl donor and reductant in the reaction, yielding dihydrofolate (DHF) as a by-product. This enzymatic reaction provides an intracellular de novo source of dTMP, an essential precursor for DNA biosynthesis. This is Thymidylate synthase from Enterobacter sp. (strain 638).